Reading from the N-terminus, the 463-residue chain is Argininosuccinate lyase (463 aa).

The protein belongs to the lyase 1 family. Argininosuccinate lyase subfamily.

It is found in the cytoplasm. It catalyses the reaction 2-(N(omega)-L-arginino)succinate = fumarate + L-arginine. The protein operates within amino-acid biosynthesis; L-arginine biosynthesis; L-arginine from L-ornithine and carbamoyl phosphate: step 3/3. In Chlorobaculum tepidum (strain ATCC 49652 / DSM 12025 / NBRC 103806 / TLS) (Chlorobium tepidum), this protein is Argininosuccinate lyase.